The primary structure comprises 405 residues: MSAQPISDFYAYPDAAGHFGKFGGRFVAETLIGPLQELSAAYDQARQDPSFIAEYDKDLKHYVGRPSPIYHAERLSREVGGAQILLKREDLNHTGAHKINNTIGQALLASRMGKTRIIAETGAGQHGVASATVAARLGLECLVYMGATDIERQKINVYRMKLLGATVIPVTSGSATLKDALNEAMRDWVTNVRDTFYIIGTVAGPDPYPRMVRDFNAIVGREARAQMLEDYGRLPDAISACVGGGSNAIGLFHAFLNDPGVKIYGAEAAGDGIATGRHAASIAAGRPGVLHGNRTYVICDDDGQITETHSISAGLDYPGVGPEHAFLSDSGRAVYQGITDDEAMAAFHLLAHTEGILAALESSHAVAQSIKLARELPKDALVLCNLSGRGDKDVHTIAAREGLAL.

At K98 the chain carries N6-(pyridoxal phosphate)lysine.

This sequence belongs to the TrpB family. In terms of assembly, tetramer of two alpha and two beta chains. It depends on pyridoxal 5'-phosphate as a cofactor.

It catalyses the reaction (1S,2R)-1-C-(indol-3-yl)glycerol 3-phosphate + L-serine = D-glyceraldehyde 3-phosphate + L-tryptophan + H2O. Its pathway is amino-acid biosynthesis; L-tryptophan biosynthesis; L-tryptophan from chorismate: step 5/5. In terms of biological role, the beta subunit is responsible for the synthesis of L-tryptophan from indole and L-serine. This is Tryptophan synthase beta chain from Xanthomonas oryzae pv. oryzae (strain PXO99A).